The chain runs to 465 residues: UDP-N-acetylmuramate--L-alanine ligase (465 aa).

Position 125–131 (Gly-125–Thr-131) interacts with ATP.

This sequence belongs to the MurCDEF family.

Its subcellular location is the cytoplasm. It carries out the reaction UDP-N-acetyl-alpha-D-muramate + L-alanine + ATP = UDP-N-acetyl-alpha-D-muramoyl-L-alanine + ADP + phosphate + H(+). Its pathway is cell wall biogenesis; peptidoglycan biosynthesis. Its function is as follows. Cell wall formation. The polypeptide is UDP-N-acetylmuramate--L-alanine ligase (Deinococcus geothermalis (strain DSM 11300 / CIP 105573 / AG-3a)).